Here is a 274-residue protein sequence, read N- to C-terminus: MAIHLYKTSTPSTRNRAVDSQVKSNPRNNLIYGQHHCGKGRNARGIITAGHRGGGHKRLYRKIDFRRNEKDIYGRIVTIEYDPNRNAYICLIHYGDGEKRYILHPRGAIIGDTIVSGTEVPIKMGNALPLTDMPLGTAIHNIEITRGKGGQLARAAGAVAKLIAKEGKSATLKLPSGEVRLISKNCSATVGQVGNVGVNQKSLGRAGSKRWLGKRPVVRGVVMNPVDHPHGGGEGRAPIGRKKPTTPWGYPALGRRSRKRNKYSDNLILRRRSK.

Residues 224-274 (NPVDHPHGGGEGRAPIGRKKPTTPWGYPALGRRSRKRNKYSDNLILRRRSK) are disordered.

Belongs to the universal ribosomal protein uL2 family. Part of the 50S ribosomal subunit.

The protein localises to the plastid. It localises to the chloroplast. The sequence is that of Large ribosomal subunit protein uL2cz/uL2cy (rpl2-A) from Panax ginseng (Korean ginseng).